The sequence spans 491 residues: Probable aspartyl aminopeptidase (491 aa).

His-90 contacts Zn(2+). His-168 provides a ligand contact to substrate. Asp-278 contributes to the Zn(2+) binding site. Glu-315 provides a ligand contact to substrate. Zn(2+) is bound by residues Glu-316 and Asp-361. The substrate site is built by Asp-361, His-364, Lys-389, and Tyr-396. His-455 lines the Zn(2+) pocket.

This sequence belongs to the peptidase M18 family. Tetrahedron-shaped homododecamer built from six homodimers. It depends on Zn(2+) as a cofactor.

It localises to the cytoplasm. The catalysed reaction is Release of an N-terminal aspartate or glutamate from a peptide, with a preference for aspartate.. Its function is as follows. Likely to play an important role in intracellular protein and peptide metabolism. The sequence is that of Probable aspartyl aminopeptidase from Ricinus communis (Castor bean).